The sequence spans 145 residues: Acidic phospholipase A2 (145 aa).

The signal sequence occupies residues 1–21; sequence MYPAHLLVLLAVCVSLLGAAS. The propeptide occupies 22–27; that stretch reads IPPLPL. 7 disulfides stabilise this stretch: Cys38–Cys98, Cys54–Cys144, Cys56–Cys72, Cys71–Cys125, Cys78–Cys118, Cys87–Cys111, and Cys105–Cys116. Ca(2+) is bound by residues Tyr55 and Gly57. His75 is a catalytic residue. Asp76 serves as a coordination point for Ca(2+). Asp119 is an active-site residue.

It belongs to the phospholipase A2 family. Group I subfamily. D49 sub-subfamily. Ca(2+) is required as a cofactor. Expressed by the venom gland.

It localises to the secreted. It carries out the reaction a 1,2-diacyl-sn-glycero-3-phosphocholine + H2O = a 1-acyl-sn-glycero-3-phosphocholine + a fatty acid + H(+). Functionally, PLA2 catalyzes the calcium-dependent hydrolysis of the 2-acyl groups in 3-sn-phosphoglycerides. In Notechis scutatus scutatus (Mainland tiger snake), this protein is Acidic phospholipase A2.